The sequence spans 355 residues: Galectin-9 (355 aa).

Galectin domains lie at 17 to 148 (FTGM…ISFQ) and 227 to 355 (FFTS…HVQT). A beta-D-galactoside contacts are provided by residues Asn-48, His-61, Arg-65, Asn-75, 82–88 (WGTEERK), His-267, Arg-271, Thr-281, and 287–293 (WGSEERS).

The protein resides in the cytoplasm. Its subcellular location is the nucleus. It is found in the secreted. Binds galactosides. Has high affinity for the Forssman pentasaccharide. Ligand for HAVCR2/TIM3. Binding to HAVCR2 induces T-helper type 1 lymphocyte (Th1) death. Also stimulates bactericidal activity in infected macrophages by causing macrophage activation and IL1B secretion which restricts intracellular bacterial growth. Ligand for P4HB; the interaction retains P4HB at the cell surface of Th2 T helper cells, increasing disulfide reductase activity at the plasma membrane, altering the plasma membrane redox state and enhancing cell migration. Ligand for CD44; the interaction enhances binding of SMAD3 to the FOXP3 promoter, leading to up-regulation of FOXP3 expression and increased induced regulatory T (iTreg) cell stability and suppressive function. Promotes ability of mesenchymal stromal cells to suppress T-cell proliferation. Expands regulatory T-cells and induces cytotoxic T-cell apoptosis following virus infection. Activates ERK1/2 phosphorylation inducing cytokine (IL-6, IL-8, IL-12) and chemokine (CCL2) production in mast and dendritic cells. Inhibits degranulation and induces apoptosis of mast cells. Induces maturation and migration of dendritic cells. Inhibits natural killer (NK) cell function. Can transform NK cell phenotype from peripheral to decidual during pregnancy. Astrocyte derived galectin-9 enhances microglial TNF production. May play a role in thymocyte-epithelial interactions relevant to the biology of the thymus. May provide the molecular basis for urate flux across cell membranes, allowing urate that is formed during purine metabolism to efflux from cells and serving as an electrogenic transporter that plays an important role in renal and gastrointestinal urate excretion. Highly selective to the anion urate. This is Galectin-9 (LGALS9) from Bos taurus (Bovine).